Reading from the N-terminus, the 1857-residue chain is U3 small nucleolar RNA-associated protein 10 (1857 aa).

The chain crosses the membrane as a helical span at residues 267–287 (LTAYSIISVLSSLVPLSADLV). One copy of the HEAT repeat lies at 1817–1855 (LIPYIAELLEDDDEEVELEVRNGLVRVIENVLGEPLDRY).

This sequence belongs to the HEATR1/UTP10 family. In terms of assembly, component of the ribosomal small subunit (SSU) processome.

Its subcellular location is the nucleus. The protein resides in the nucleolus. The protein localises to the membrane. Its function is as follows. Involved in nucleolar processing of pre-18S ribosomal RNA. Involved in ribosome biosynthesis. The polypeptide is U3 small nucleolar RNA-associated protein 10 (Debaryomyces hansenii (strain ATCC 36239 / CBS 767 / BCRC 21394 / JCM 1990 / NBRC 0083 / IGC 2968) (Yeast)).